Here is a 298-residue protein sequence, read N- to C-terminus: MQLLKASDIISHLQIDGIFPGGNAIPCTHLNNYMNIKEKQLMNTIADVQSSRDLRNLPINQVGIKDLRFPITLQTAEGIQSTIARLTMTVYLPAEQKGTHMSRFVALMEQHAEALDFAQLRKLTTEMVALLDSRAGKISVSFPFFRKKTAPVSGIRSLLDYDVCLTGEIKDGAYGHSMKVMIPVTSLCPCSKEISQYGAHNQRSHVTVSLTADAEVGIEEVIDYVEAQASCQLYGLLKRPDEKYVTEKAYENPKFVEDMVRDVATSLIADKRIKSFVVESENFESIHNHSAYAYIAYP.

This sequence belongs to the GTP cyclohydrolase IV family.

It catalyses the reaction GTP + H2O = 7,8-dihydroneopterin 3'-triphosphate + formate + H(+). It participates in cofactor biosynthesis; 7,8-dihydroneopterin triphosphate biosynthesis; 7,8-dihydroneopterin triphosphate from GTP: step 1/1. Converts GTP to 7,8-dihydroneopterin triphosphate. The chain is GTP cyclohydrolase FolE2 from Neisseria meningitidis serogroup B (strain ATCC BAA-335 / MC58).